A 147-amino-acid polypeptide reads, in one-letter code: Probable 4-amino-4-deoxy-L-arabinose-phosphoundecaprenol flippase subunit ArnF (147 aa).

The Cytoplasmic segment spans residues 1 to 23 (MSNDHPQGQLPASPARSALKGYL). Residues 24–44 (YVLGSILLVTAAQLGMKWGVI) form a helical membrane-spanning segment. The Periplasmic segment spans residues 45–62 (QLPTWQMDLAVMLAHPLP). A helical transmembrane segment spans residues 63 to 83 (LLVILAGVGCYALSLLCWLAA). Topologically, residues 84-93 (LHSTPLNIAY) are cytoplasmic. Residues 94–114 (PLLSTSYALVYLLAVNIPLFA) form a helical membrane-spanning segment. The Periplasmic segment spans residues 115–121 (EPLEPGK). A helical transmembrane segment spans residues 122 to 142 (ALGVLFILLGAVLVGIKPAAG). At 143–147 (TKQTG) the chain is on the cytoplasmic side.

Belongs to the ArnF family. Heterodimer of ArnE and ArnF.

It is found in the cell inner membrane. It functions in the pathway bacterial outer membrane biogenesis; lipopolysaccharide biosynthesis. Functionally, translocates 4-amino-4-deoxy-L-arabinose-phosphoundecaprenol (alpha-L-Ara4N-phosphoundecaprenol) from the cytoplasmic to the periplasmic side of the inner membrane. This Aeromonas hydrophila subsp. hydrophila (strain ATCC 7966 / DSM 30187 / BCRC 13018 / CCUG 14551 / JCM 1027 / KCTC 2358 / NCIMB 9240 / NCTC 8049) protein is Probable 4-amino-4-deoxy-L-arabinose-phosphoundecaprenol flippase subunit ArnF.